We begin with the raw amino-acid sequence, 394 residues long: RNA binding protein fox-1 homolog 2 (394 aa).

Disordered regions lie at residues 1 to 70 (MGRL…DYAG) and 83 to 135 (TQAH…HVSN). 2 stretches are compositionally biased toward polar residues: residues 24–36 (RDSQ…TTTP) and 83–103 (TQAH…SLTT). Residues 105–125 (GGAQTDGQQSQTQSSENSESK) are compositionally biased toward low complexity. One can recognise an RRM domain in the interval 129–205 (KRLHVSNIPF…RKIEVNNATA (77 aa)). Arg285 bears the Omega-N-methylarginine mark. Asymmetric dimethylarginine is present on residues Arg301 and Arg333. Residues Arg385 and Arg390 each carry the asymmetric dimethylarginine; alternate modification. Arg385 and Arg390 each carry omega-N-methylarginine; alternate.

In terms of assembly, interacts with ER-alpha N-terminal activation domain. Interacts with RBPMS; the interaction allows cooperative assembly of stable cell-specific alternative splicing regulatory complexes.

The protein localises to the nucleus. It localises to the cytoplasm. In terms of biological role, RNA-binding protein that regulates alternative splicing events by binding to 5'-UGCAUGU-3' elements. Prevents binding of U2AF2 to the 3'-splice site. Regulates alternative splicing of tissue-specific exons and of differentially spliced exons during erythropoiesis. Seems to act as a coregulatory factor of ER-alpha. Together with RNA binding proteins RBPMS and MBNL1/2, activates vascular smooth muscle cells alternative splicing events. This Bos taurus (Bovine) protein is RNA binding protein fox-1 homolog 2 (RBFOX2).